The chain runs to 697 residues: Elongation factor G (697 aa).

The tr-type G domain maps to 10–290 (THFRNIGIAA…AVVDYLPSPL (281 aa)). Residues 19 to 26 (AHIDAGKT), 89 to 93 (DTPGH), and 143 to 146 (NKMD) contribute to the GTP site.

Belongs to the TRAFAC class translation factor GTPase superfamily. Classic translation factor GTPase family. EF-G/EF-2 subfamily.

The protein resides in the cytoplasm. Functionally, catalyzes the GTP-dependent ribosomal translocation step during translation elongation. During this step, the ribosome changes from the pre-translocational (PRE) to the post-translocational (POST) state as the newly formed A-site-bound peptidyl-tRNA and P-site-bound deacylated tRNA move to the P and E sites, respectively. Catalyzes the coordinated movement of the two tRNA molecules, the mRNA and conformational changes in the ribosome. The chain is Elongation factor G from Deinococcus deserti (strain DSM 17065 / CIP 109153 / LMG 22923 / VCD115).